The chain runs to 144 residues: Large ribosomal subunit protein uL15 (144 aa).

A disordered region spans residues Met-1–Gly-53. The span at Arg-21 to Gly-31 shows a compositional bias: gly residues.

Belongs to the universal ribosomal protein uL15 family. As to quaternary structure, part of the 50S ribosomal subunit.

Functionally, binds to the 23S rRNA. The sequence is that of Large ribosomal subunit protein uL15 from Edwardsiella ictaluri (strain 93-146).